A 349-amino-acid polypeptide reads, in one-letter code: Peroxidase C3 (349 aa).

An N-terminal signal peptide occupies residues 1–29 (MGFSPLISCSAMGALILSCLLLQASNSNA). Disulfide bonds link Cys-40–Cys-120, Cys-73–Cys-78, Cys-126–Cys-329, and Cys-206–Cys-238. Residue His-71 is the Proton acceptor of the active site. Residues Asp-72, Val-75, Gly-77, Asp-79, and Ser-81 each contribute to the Ca(2+) site. The N-linked (GlcNAc...) asparagine glycan is linked to Asn-86. Pro-168 serves as a coordination point for substrate. His-199 is a binding site for heme b. Thr-200 contacts Ca(2+). Residues Asn-217 and Asn-243 are each glycosylated (N-linked (GlcNAc...) asparagine). Ca(2+) is bound by residues Asp-251, Thr-254, and Asp-259.

The protein belongs to the peroxidase family. Classical plant (class III) peroxidase subfamily. It depends on Ca(2+) as a cofactor. Heme b serves as cofactor.

It localises to the secreted. Its subcellular location is the vacuole. It carries out the reaction 2 a phenolic donor + H2O2 = 2 a phenolic radical donor + 2 H2O. Removal of H(2)O(2), oxidation of toxic reductants, biosynthesis and degradation of lignin, suberization, auxin catabolism, response to environmental stresses such as wounding, pathogen attack and oxidative stress. These functions might be dependent on each isozyme/isoform in each plant tissue. This is Peroxidase C3 (PRXC3) from Armoracia rusticana (Horseradish).